Reading from the N-terminus, the 231-residue chain is Two-component response regulator ORR1 (231 aa).

In terms of domain architecture, Response regulatory spans 9-135 (RVLLVDDSPV…DVQRLRNCSP (127 aa)). Aspartate 68 bears the 4-aspartylphosphate mark.

It belongs to the ARR family. Type-A subfamily. Post-translationally, two-component system major event consists of a His-to-Asp phosphorelay between a sensor histidine kinase (HK) and a response regulator (RR). In plants, the His-to-Asp phosphorelay involves an additional intermediate named Histidine-containing phosphotransfer protein (HPt). This multistep phosphorelay consists of a His-Asp-His-Asp sequential transfer of a phosphate group between first a His and an Asp of the HK protein, followed by the transfer to a conserved His of the HPt protein and finally the transfer to an Asp in the receiver domain of the RR protein. Expressed in roots, leaf blades, leaf sheaths, shoot apex, flowers and panicles.

Functions as a response regulator involved in His-to-Asp phosphorelay signal transduction system. Phosphorylation of the Asp residue in the receiver domain activates the ability of the protein to promote the transcription of target genes. Type-A response regulators seem to act as negative regulators of the cytokinin signaling. Involved in adventitious (crown) root initiation under the regulation of CRL5. The polypeptide is Two-component response regulator ORR1 (Oryza sativa subsp. japonica (Rice)).